A 544-amino-acid polypeptide reads, in one-letter code: Probable protein kinase UbiB (544 aa).

A Protein kinase domain is found at Asp123 to Leu501. ATP is bound by residues Leu129–Val137 and Lys152. Catalysis depends on Asp287, which acts as the Proton acceptor. 2 consecutive transmembrane segments (helical) span residues Ala496 to Val516 and Thr519 to Trp539.

The protein belongs to the ABC1 family. UbiB subfamily.

Its subcellular location is the cell inner membrane. It functions in the pathway cofactor biosynthesis; ubiquinone biosynthesis [regulation]. Is probably a protein kinase regulator of UbiI activity which is involved in aerobic coenzyme Q (ubiquinone) biosynthesis. This Vibrio vulnificus (strain CMCP6) protein is Probable protein kinase UbiB.